Reading from the N-terminus, the 864-residue chain is Disintegrin and metalloproteinase domain-containing protein 15 (864 aa).

The first 17 residues, 1–17 (MRLALLWALGLLGAGSP), serve as a signal peptide directing secretion. Positions 18–45 (RPSPPLPNIGGTEEEQQASPERTLSGSM) are disordered. The propeptide occupies 18–207 (RPSPPLPNIG…EQHHAHRLKR (190 aa)). Polar residues predominate over residues 34 to 45 (QASPERTLSGSM). A Cysteine switch motif is present at residues 177–184 (HTCAPSWH). C179 is a binding site for Zn(2+). The Extracellular segment spans residues 208 to 696 (DVVTETKIVE…TQLKATSSLT (489 aa)). The 202-residue stretch at 214–415 (KIVELVIVAD…GMGSCLFERQ (202 aa)) folds into the Peptidase M12B domain. N238 carries N-linked (GlcNAc...) asparagine glycosylation. 4 disulfide bridges follow: C324–C410, C366–C394, C368–C377, and C481–C501. H349 lines the Zn(2+) pocket. Residue E350 is part of the active site. Residues H353 and H359 each coordinate Zn(2+). N390 and N393 each carry an N-linked (GlcNAc...) asparagine glycan. The 88-residue stretch at 422-509 (SSLCGNMFVD…QCPSDIRLGD (88 aa)) folds into the Disintegrin domain. N607 and N612 each carry an N-linked (GlcNAc...) asparagine glycan. Intrachain disulfides connect C658-C668, C662-C674, and C676-C685. An EGF-like domain is found at 658–686 (CRRKCHGHGVCDSSGHCRCEEGWAPPDCM). A helical membrane pass occupies residues 697–717 (TGLLLSLLLLLVLVLLGASYW). Y716 and Y736 each carry phosphotyrosine; by HCK and LCK. The Cytoplasmic segment spans residues 718 to 864 (HRARLHQRLC…PPPAASSLYL (147 aa)). Positions 736-864 (YRAPQSCPPE…PPPAASSLYL (129 aa)) are disordered. The segment covering 741 to 750 (SCPPERPGPP) has biased composition (pro residues). Residues 752–762 (RAQQMTGTKQA) are compositionally biased toward polar residues. 2 stretches are compositionally biased toward pro residues: residues 768–780 (PVPP…PNPV) and 814–825 (TKPPPPRKPLPA). 2 short sequence motifs (SH3-binding) span residues 816-822 (PPPPRKP) and 851-857 (RPAPPPP).

As to quaternary structure, interacts specifically with Src family protein-tyrosine kinases (PTKs). Interacts with ITAGV-ITGB3 (vitronectin receptor). Interacts with SH3GL2 and SNX9; this interaction occurs preferentially with ADAM15 precursor, rather than the processed form, suggesting it occurs in a secretory pathway compartment prior to the medial Golgi. Interacts with ITAG9-ITGB1. Interacts with SH3PXD2A. Interacts with ITAGV-ITGB1. Interacts with GRB2, HCK, ITSN1, ITSN2, LYN, MAPK1, MAPK3, NCF1, NCK1, nephrocystin, PTK6, SNX33, LCK and SRC. Zn(2+) is required as a cofactor. In terms of processing, the precursor is cleaved by a furin endopeptidase. An additional membrane proximal site of cleavage affects a small percentage of the proteins and results in disulfide-linked fragments. The prodomain is apparently cleaved in several positions that are N-terminal of the furin cleavage site. Post-translationally, may be partially sialylated. Phosphorylation increases association with PTKs. Expressed moderately in pericytes of retina. Expressed in testis and in spermatozoa from the caput, corpus, and cauda epididymis, as well as in non-capacitated and acrosome-reacted sperm (at protein level). Highly expressed in heart, brain, lung, and kidney. Expressed at lower levels in spleen, liver, testis and muscle.

The protein localises to the endomembrane system. It localises to the cell junction. Its subcellular location is the adherens junction. It is found in the cell projection. The protein resides in the cilium. The protein localises to the flagellum. It localises to the cytoplasmic vesicle. Its subcellular location is the secretory vesicle. It is found in the acrosome. In terms of biological role, active metalloproteinase with gelatinolytic and collagenolytic activity. Plays a role in the wound healing process. Mediates both heterotypic intraepithelial cell/T-cell interactions and homotypic T-cell aggregation. Inhibits beta-1 integrin-mediated cell adhesion and migration of airway smooth muscle cells. Suppresses cell motility on or towards fibronectin possibly by driving alpha-v/beta-1 integrin (ITAGV-ITGB1) cell surface expression via ERK1/2 inactivation. Cleaves E-cadherin in response to growth factor deprivation. Plays a role in glomerular cell migration. Plays a role in pathological neovascularization. May play a role in cartilage remodeling. May be proteolytically processed, during sperm epididymal maturation and the acrosome reaction. May play a role in sperm-egg binding through its disintegrin domain. Interactions with egg membrane could be mediated via binding between the disintegrin-like domain to one or more integrin receptors on the egg. This Mus musculus (Mouse) protein is Disintegrin and metalloproteinase domain-containing protein 15 (Adam15).